The following is a 703-amino-acid chain: Subtilisin-like protease SBT4.7 (703 aa).

A signal peptide spans methionine 1–alanine 19. The propeptide at valine 20 to glutamine 107 is activation peptide. The Inhibitor I9 domain occupies valine 29 to leucine 106. Positions serine 111–isoleucine 556 constitute a Peptidase S8 domain. Aspartate 139 (charge relay system) is an active-site residue. N-linked (GlcNAc...) asparagine glycosylation is present at asparagine 170. Histidine 194 functions as the Charge relay system in the catalytic mechanism. N-linked (GlcNAc...) asparagine glycans are attached at residues asparagine 217, asparagine 360, asparagine 416, and asparagine 433. In terms of domain architecture, PA spans lysine 350–leucine 411. The active-site Charge relay system is the serine 495. N-linked (GlcNAc...) asparagine glycans are attached at residues asparagine 577, asparagine 615, and asparagine 633.

This sequence belongs to the peptidase S8 family. Post-translationally, the C-terminal propeptide is autocleaved.

Its subcellular location is the secreted. The polypeptide is Subtilisin-like protease SBT4.7 (Arabidopsis thaliana (Mouse-ear cress)).